Consider the following 935-residue polypeptide: Protein translocase subunit SecA (935 aa).

ATP is bound by residues Q86, 104–108 (GEGKT), and D494. The tract at residues 879–935 (EQAATARAQQHSSAAVAAPEQGATQRGAFGQRVSAADDAAPANRAERRAQKKPTKRH) is disordered.

This sequence belongs to the SecA family. Monomer and homodimer. Part of the essential Sec protein translocation apparatus which comprises SecA, SecYEG and auxiliary proteins SecDF. Other proteins may also be involved.

Its subcellular location is the cell membrane. The protein localises to the cytoplasm. The catalysed reaction is ATP + H2O + cellular proteinSide 1 = ADP + phosphate + cellular proteinSide 2.. Functionally, part of the Sec protein translocase complex. Interacts with the SecYEG preprotein conducting channel. Has a central role in coupling the hydrolysis of ATP to the transfer of proteins into and across the cell membrane, serving as an ATP-driven molecular motor driving the stepwise translocation of polypeptide chains across the membrane. This chain is Protein translocase subunit SecA, found in Leifsonia xyli subsp. xyli (strain CTCB07).